The chain runs to 506 residues: Zinc finger and SCAN domain containing protein 4F (506 aa).

Residues 1-24 form a disordered region; it reads MASQQAPAKDLQTNNLEFTPTDSS. The SCAN box domain maps to 37–119; that stretch reads SAQLNFSPSN…RFMESLTDEC (83 aa). C2H2-type zinc fingers lie at residues 395–417, 424–446, 452–474, and 480–503; these read YKCE…QRTH, LLCV…EIIH, FKCS…EMIH, and YVCS…RNYH.

As to expression, up-regulated in blastocyst outgrowths and is detectable in a mosaic fashion in ES cultures.

The protein resides in the nucleus. The protein localises to the chromosome. It is found in the telomere. Functionally, transcription factor required to regulate early development. Binds telomeres and plays a key role in genomic stability by regulating telomere elongation. Acts as an activator of spontaneous telomere sister chromatid exchange (T-SCE) and telomere elongation. This is Zinc finger and SCAN domain containing protein 4F (Zscan4f) from Mus musculus (Mouse).